The chain runs to 55 residues: Large ribosomal subunit protein bL33 (55 aa).

The protein belongs to the bacterial ribosomal protein bL33 family.

In Pectobacterium carotovorum subsp. carotovorum (strain PC1), this protein is Large ribosomal subunit protein bL33.